The following is a 457-amino-acid chain: Vasoactive intestinal polypeptide receptor 1 (457 aa).

The first 30 residues, 1–30 (MRPPSPLPARWLCVLAGALAWALGPAGGQA), serve as a signal peptide directing secretion. Over 31–141 (ARLQEECDYV…DEQQTMFYGS (111 aa)) the chain is Extracellular. Disulfide bonds link cysteine 37/cysteine 208, cysteine 50/cysteine 72, cysteine 63/cysteine 105, cysteine 86/cysteine 122, and cysteine 215/cysteine 285. Residues asparagine 58, asparagine 69, and asparagine 100 are each glycosylated (N-linked (GlcNAc...) asparagine). Residues 142–166 (VKTGYTIGYGLSLATLLVATAILSL) form a helical membrane-spanning segment. Residues 167–174 (FRKLHCTR) lie on the Cytoplasmic side of the membrane. The helical transmembrane segment at 175–196 (NYIHMHLFISFILRAAAVFIKD) threads the bilayer. The Extracellular portion of the chain corresponds to 197 to 216 (LALFDSGESDQCSEGSVGCK). The chain crosses the membrane as a helical span at residues 217–241 (AAMVFFQYCVMANFFWLLVEGLYLY). At 242–254 (TLLAVSFFSERKY) the chain is on the cytoplasmic side. The chain crosses the membrane as a helical span at residues 255 to 276 (FWGYILIGWGVPSTFTMVWTIA). The Extracellular portion of the chain corresponds to 277-291 (RIHFEDYGCWDTINS). The N-linked (GlcNAc...) asparagine glycan is linked to asparagine 290. Residues 292 to 316 (SLWWIIKGPILTSILVNFILFICII) traverse the membrane as a helical segment. The Cytoplasmic segment spans residues 317–338 (RILLQKLRPPDIRKSDSSPYSR). A helical transmembrane segment spans residues 339–359 (LARSTLLLIPLFGVHYIMFAF). The Extracellular segment spans residues 360–367 (FPDNFKPE). Residues 368–391 (VKMVFELVVGSFQGFVVAILYCFL) traverse the membrane as a helical segment. The Cytoplasmic segment spans residues 392 to 457 (NGEVQAELRR…SSFQAEVSLV (66 aa)).

Belongs to the G-protein coupled receptor 2 family. Interacts with ADCYAP1/PACAP; activated by both PACAP27 and PACAP38 neuropeptides. Interacts with VIP; the interaction results in VIPR1 activation. In lung, HT-29 colonic epithelial cells, Raji B-lymphoblasts. Lesser extent in brain, heart, kidney, liver and placenta. Not expressed in CD4+ or CD8+ T-cells. Expressed in the T-cell lines HARRIS, HuT 78, Jurkat and SUP-T1, but not in the T-cell lines Peer, MOLT-4, HSB and YT.

It is found in the cell membrane. Its function is as follows. G protein-coupled receptor activated by the neuropeptides vasoactive intestinal peptide (VIP) and pituitary adenylate cyclase-activating polypeptide (ADCYAP1/PACAP). Binds VIP and both PACAP27 and PACAP38 bioactive peptides with the following order of ligand affinity VIP = PACAP27 &gt; PACAP38. Ligand binding causes a conformation change that triggers signaling via guanine nucleotide-binding proteins (G proteins) and modulates the activity of downstream effectors. Activates cAMP-dependent pathway. This Homo sapiens (Human) protein is Vasoactive intestinal polypeptide receptor 1.